The primary structure comprises 357 residues: DNA replication and repair protein RecF (357 aa).

Residue 31 to 38 (GQNGAGKT) coordinates ATP.

It belongs to the RecF family.

Its subcellular location is the cytoplasm. In terms of biological role, the RecF protein is involved in DNA metabolism; it is required for DNA replication and normal SOS inducibility. RecF binds preferentially to single-stranded, linear DNA. It also seems to bind ATP. The polypeptide is DNA replication and repair protein RecF (Coxiella burnetii (strain RSA 493 / Nine Mile phase I)).